We begin with the raw amino-acid sequence, 396 residues long: Elongation factor Tu 1 (396 aa).

Positions K10–E206 constitute a tr-type G domain. Residues G19–T26 form a G1 region. Residue G19–T26 participates in GTP binding. T26 is a binding site for Mg(2+). A G2 region spans residues G60–A64. Positions D81–G84 are G3. GTP is bound by residues D81–H85 and N136–D139. A G4 region spans residues N136 to D139. The segment at S174 to L176 is G5.

It belongs to the TRAFAC class translation factor GTPase superfamily. Classic translation factor GTPase family. EF-Tu/EF-1A subfamily. In terms of assembly, monomer.

The protein resides in the cytoplasm. It carries out the reaction GTP + H2O = GDP + phosphate + H(+). GTP hydrolase that promotes the GTP-dependent binding of aminoacyl-tRNA to the A-site of ribosomes during protein biosynthesis. The protein is Elongation factor Tu 1 of Halorhodospira halophila (strain DSM 244 / SL1) (Ectothiorhodospira halophila (strain DSM 244 / SL1)).